We begin with the raw amino-acid sequence, 290 residues long: Appressoria-specific virulence factor GAS2 (290 aa).

An N-terminal signal peptide occupies residues 1 to 19 (MKYTSAILISAFAATNVFA). N-linked (GlcNAc...) asparagine glycosylation occurs at N99. The tract at residues 121-140 (LPRAGGGTSTPKGTEETGVK) is disordered.

The protein resides in the cytoplasm. In terms of biological role, appressoria-specific virulence factor required for appressorial penetration in host and lesion development. This chain is Appressoria-specific virulence factor GAS2, found in Pyricularia oryzae (strain 70-15 / ATCC MYA-4617 / FGSC 8958) (Rice blast fungus).